A 489-amino-acid chain; its full sequence is Betaine aldehyde dehydrogenase (489 aa).

2 residues coordinate K(+): Thr-26 and Asp-93. 150-152 provides a ligand contact to NAD(+); that stretch reads GAW. Lys-162 serves as the catalytic Charge relay system. 176 to 179 contributes to the NAD(+) binding site; it reads KPSE. Val-180 is a K(+) binding site. 229–232 is a binding site for NAD(+); the sequence is GVET. A K(+)-binding site is contributed by Leu-245. Glu-251 functions as the Proton acceptor in the catalytic mechanism. The NAD(+) site is built by Gly-253, Cys-285, and Glu-386. The active-site Nucleophile is the Cys-285. Cys-285 carries the cysteine sulfenic acid (-SOH) modification. 2 residues coordinate K(+): Lys-456 and Gly-459. Glu-463 (charge relay system) is an active-site residue.

This sequence belongs to the aldehyde dehydrogenase family. Dimer of dimers. K(+) serves as cofactor.

The enzyme catalyses betaine aldehyde + NAD(+) + H2O = glycine betaine + NADH + 2 H(+). It participates in amine and polyamine biosynthesis; betaine biosynthesis via choline pathway; betaine from betaine aldehyde: step 1/1. Involved in the biosynthesis of the osmoprotectant glycine betaine. Catalyzes the irreversible oxidation of betaine aldehyde to the corresponding acid. The polypeptide is Betaine aldehyde dehydrogenase (Burkholderia multivorans (strain ATCC 17616 / 249)).